We begin with the raw amino-acid sequence, 574 residues long: Mitochondrial distribution and morphology protein 34 (574 aa).

The SMP-LTD domain occupies 1–195 (MAFNFNWSPL…LPAIIHRLSL (195 aa)). 3 disordered regions span residues 210–233 (RESP…KDPV), 301–403 (EGAA…TPPT), and 479–515 (SADG…ESNA). Low complexity-rich tracts occupy residues 212-224 (SPAA…GEDP), 302-314 (GAAS…GSPV), and 323-334 (SSPLSSLQDASS). The segment covering 335 to 345 (VLSLQNRSTTP) has biased composition (polar residues). The span at 346 to 359 (GSSFSGYGLSLGAG) shows a compositional bias: low complexity. Positions 360–373 (RHSKTRPTRKRKKR) are enriched in basic residues. Residues 374-385 (VVDLRKHNKPAD) show a composition bias toward basic and acidic residues. Positions 393–403 (STFTESTTPPT) are enriched in low complexity. Residues 484 to 493 (KTSSQQQPIS) show a composition bias toward polar residues.

The protein belongs to the MDM34 family. Component of the ER-mitochondria encounter structure (ERMES) or MDM complex, composed of MMM1, MDM10, MDM12 and MDM34.

It localises to the mitochondrion outer membrane. Functionally, component of the ERMES/MDM complex, which serves as a molecular tether to connect the endoplasmic reticulum (ER) and mitochondria. Components of this complex are involved in the control of mitochondrial shape and protein biogenesis, and function in nonvesicular lipid trafficking between the ER and mitochondria. MDM34 is required for the interaction of the ER-resident membrane protein MMM1 and the outer mitochondrial membrane-resident beta-barrel protein MDM10. The chain is Mitochondrial distribution and morphology protein 34 from Coccidioides immitis (strain RS) (Valley fever fungus).